The chain runs to 618 residues: DNA mismatch repair protein MutL (618 aa).

The protein belongs to the DNA mismatch repair MutL/HexB family.

This protein is involved in the repair of mismatches in DNA. It is required for dam-dependent methyl-directed DNA mismatch repair. May act as a 'molecular matchmaker', a protein that promotes the formation of a stable complex between two or more DNA-binding proteins in an ATP-dependent manner without itself being part of a final effector complex. This is DNA mismatch repair protein MutL from Bradyrhizobium sp. (strain BTAi1 / ATCC BAA-1182).